Reading from the N-terminus, the 250-residue chain is Probable transcriptional regulatory protein Ctha_1786 (250 aa).

It belongs to the TACO1 family.

It is found in the cytoplasm. The sequence is that of Probable transcriptional regulatory protein Ctha_1786 from Chloroherpeton thalassium (strain ATCC 35110 / GB-78).